Here is a 363-residue protein sequence, read N- to C-terminus: Protein MAK32 (363 aa).

This sequence to S.pombe SpAC4G8.14c.

Functionally, necessary for the structural stability of L-A double-stranded RNA-containing particles. Necessary for growth at 37 degrees Celsius as well as for maintenance of the killer plasmid. The protein is Protein MAK32 (MAK32) of Saccharomyces cerevisiae (strain ATCC 204508 / S288c) (Baker's yeast).